The following is a 442-amino-acid chain: Proline--tRNA ligase (442 aa).

The protein belongs to the class-II aminoacyl-tRNA synthetase family. ProS type 2 subfamily. Homodimer.

Its subcellular location is the cytoplasm. It carries out the reaction tRNA(Pro) + L-proline + ATP = L-prolyl-tRNA(Pro) + AMP + diphosphate. Catalyzes the attachment of proline to tRNA(Pro) in a two-step reaction: proline is first activated by ATP to form Pro-AMP and then transferred to the acceptor end of tRNA(Pro). This chain is Proline--tRNA ligase, found in Brucella melitensis biotype 2 (strain ATCC 23457).